Reading from the N-terminus, the 896-residue chain is NET1-associated nuclear protein 1 (896 aa).

WD repeat units lie at residues 295–334 (WHIDSVLSLSFSHDGSYLLSGGWEKVMSLWQLETNSQQFL), 490–542 (LQDP…TNWN), 552–595 (GISV…SNWC), and 605–645 (NHFS…ESLE).

Interacts with snoRNA U3. Interacts with MPP10. Component of the ribosomal small subunit (SSU) processome composed of at least 40 protein subunits and snoRNA U3. In the absence of snoRNA3, forms a complex with other t-UTPs. This complex can associate with pre-18S ribosomal RNAs.

The protein resides in the nucleus. It is found in the nucleolus. Involved in nucleolar processing of pre-18S ribosomal RNA. Required for optimal pre-ribosomal RNA transcription by RNA polymerase I together with a subset of U3 proteins required for transcription (t-UTPs). This Saccharomyces cerevisiae (strain ATCC 204508 / S288c) (Baker's yeast) protein is NET1-associated nuclear protein 1 (NAN1).